Here is a 149-residue protein sequence, read N- to C-terminus: Large ribosomal subunit protein uL15 (149 aa).

Residues 8–49 (HDLRPAAGSNKPKTRVGRGEASKGKTAGRGTKGTGARKQVPA) are disordered. Positions 31–45 (GKTAGRGTKGTGARK) are enriched in low complexity.

Belongs to the universal ribosomal protein uL15 family. Part of the 50S ribosomal subunit.

Functionally, binds to the 23S rRNA. The sequence is that of Large ribosomal subunit protein uL15 from Corynebacterium aurimucosum (strain ATCC 700975 / DSM 44827 / CIP 107346 / CN-1) (Corynebacterium nigricans).